A 184-amino-acid polypeptide reads, in one-letter code: GMP synthase [glutamine-hydrolyzing] subunit A (184 aa).

Residues 3–184 (HIAVIDNHGQ…VFKNFIARCQ (182 aa)) enclose the Glutamine amidotransferase type-1 domain. C75 functions as the Nucleophile in the catalytic mechanism. Residues H163 and E165 contribute to the active site.

In terms of assembly, heterodimer composed of a glutamine amidotransferase subunit (A) and a GMP-binding subunit (B).

The catalysed reaction is XMP + L-glutamine + ATP + H2O = GMP + L-glutamate + AMP + diphosphate + 2 H(+). It participates in purine metabolism; GMP biosynthesis; GMP from XMP (L-Gln route): step 1/1. In terms of biological role, catalyzes the synthesis of GMP from XMP. The chain is GMP synthase [glutamine-hydrolyzing] subunit A from Haloquadratum walsbyi (strain DSM 16790 / HBSQ001).